The sequence spans 786 residues: Endonuclease MutS2 (786 aa).

335-342 (GPNTGGKT) is an ATP binding site. The 76-residue stretch at 711–786 (LDLRGERFEN…GLGVTVVELK (76 aa)) folds into the Smr domain.

It belongs to the DNA mismatch repair MutS family. MutS2 subfamily. As to quaternary structure, homodimer. Binds to stalled ribosomes, contacting rRNA.

In terms of biological role, endonuclease that is involved in the suppression of homologous recombination and thus may have a key role in the control of bacterial genetic diversity. Its function is as follows. Acts as a ribosome collision sensor, splitting the ribosome into its 2 subunits. Detects stalled/collided 70S ribosomes which it binds and splits by an ATP-hydrolysis driven conformational change. Acts upstream of the ribosome quality control system (RQC), a ribosome-associated complex that mediates the extraction of incompletely synthesized nascent chains from stalled ribosomes and their subsequent degradation. Probably generates substrates for RQC. The sequence is that of Endonuclease MutS2 from Bacillus cytotoxicus (strain DSM 22905 / CIP 110041 / 391-98 / NVH 391-98).